Consider the following 144-residue polypeptide: Putative acetyltransferase SAOUHSC_00995 (144 aa).

An N-acetyltransferase domain is found at 1–141 (MFSKVNNQKM…EHIEMTKKLT (141 aa)). CoA contacts are provided by residues 71–73 (VAV), Gly-79, and 112–114 (PFY).

This sequence belongs to the UPF0039 (ElaA) family.

Could catalyze the transfer of an acetyl group from acetyl coenzyme A (AcCoA) to an acceptor substrate and release both CoA and the acetylated product. The sequence is that of Putative acetyltransferase SAOUHSC_00995 from Staphylococcus aureus (strain NCTC 8325 / PS 47).